The primary structure comprises 383 residues: Large ribosomal subunit protein uL2m (383 aa).

Disordered regions lie at residues 97-122 and 322-357; these read FPKK…GGGH and MNAN…YKTR. Basic residues-rich tracts occupy residues 106-122 and 330-340; these read GRNH…GGGH and GGGRGKSKGNR.

This sequence belongs to the universal ribosomal protein uL2 family. As to quaternary structure, component of the mitochondrial large ribosomal subunit (mt-LSU). Mature N.crassa 74S mitochondrial ribosomes consist of a small (37S) and a large (54S) subunit. The 37S small subunit contains a 16S ribosomal RNA (16S mt-rRNA) and 32 different proteins. The 54S large subunit contains a 23S rRNA (23S mt-rRNA) and 42 different proteins.

The protein resides in the mitochondrion. Its function is as follows. Component of the mitochondrial ribosome (mitoribosome), a dedicated translation machinery responsible for the synthesis of mitochondrial genome-encoded proteins, including at least some of the essential transmembrane subunits of the mitochondrial respiratory chain. The mitoribosomes are attached to the mitochondrial inner membrane and translation products are cotranslationally integrated into the membrane. In Neurospora crassa (strain ATCC 24698 / 74-OR23-1A / CBS 708.71 / DSM 1257 / FGSC 987), this protein is Large ribosomal subunit protein uL2m (rml2).